Reading from the N-terminus, the 497-residue chain is Glycerol kinase (497 aa).

T11 is an ADP binding site. T11, T12, and S13 together coordinate ATP. T11 contacts sn-glycerol 3-phosphate. R15 provides a ligand contact to ADP. The sn-glycerol 3-phosphate site is built by R81, E82, Y133, and D242. Glycerol contacts are provided by R81, E82, Y133, D242, and Q243. The ADP site is built by T264 and G306. ATP contacts are provided by T264, G306, Q310, and G407. Residues G407 and N411 each coordinate ADP.

The protein belongs to the FGGY kinase family.

It catalyses the reaction glycerol + ATP = sn-glycerol 3-phosphate + ADP + H(+). It functions in the pathway polyol metabolism; glycerol degradation via glycerol kinase pathway; sn-glycerol 3-phosphate from glycerol: step 1/1. Its activity is regulated as follows. Inhibited by fructose 1,6-bisphosphate (FBP). Functionally, key enzyme in the regulation of glycerol uptake and metabolism. Catalyzes the phosphorylation of glycerol to yield sn-glycerol 3-phosphate. This chain is Glycerol kinase, found in Alcanivorax borkumensis (strain ATCC 700651 / DSM 11573 / NCIMB 13689 / SK2).